The following is a 322-amino-acid chain: 4-hydroxy-3-methylbut-2-enyl diphosphate reductase (322 aa).

Residue cysteine 12 participates in [4Fe-4S] cluster binding. The (2E)-4-hydroxy-3-methylbut-2-enyl diphosphate site is built by histidine 43 and histidine 81. 2 residues coordinate dimethylallyl diphosphate: histidine 43 and histidine 81. 2 residues coordinate isopentenyl diphosphate: histidine 43 and histidine 81. A [4Fe-4S] cluster-binding site is contributed by cysteine 103. Histidine 131 provides a ligand contact to (2E)-4-hydroxy-3-methylbut-2-enyl diphosphate. Histidine 131 serves as a coordination point for dimethylallyl diphosphate. Isopentenyl diphosphate is bound at residue histidine 131. Glutamate 133 serves as the catalytic Proton donor. Threonine 172 serves as a coordination point for (2E)-4-hydroxy-3-methylbut-2-enyl diphosphate. Cysteine 200 contributes to the [4Fe-4S] cluster binding site. (2E)-4-hydroxy-3-methylbut-2-enyl diphosphate contacts are provided by serine 228, asparagine 230, and serine 273. The dimethylallyl diphosphate site is built by serine 228, asparagine 230, and serine 273. 3 residues coordinate isopentenyl diphosphate: serine 228, asparagine 230, and serine 273.

The protein belongs to the IspH family. Requires [4Fe-4S] cluster as cofactor.

The enzyme catalyses isopentenyl diphosphate + 2 oxidized [2Fe-2S]-[ferredoxin] + H2O = (2E)-4-hydroxy-3-methylbut-2-enyl diphosphate + 2 reduced [2Fe-2S]-[ferredoxin] + 2 H(+). It catalyses the reaction dimethylallyl diphosphate + 2 oxidized [2Fe-2S]-[ferredoxin] + H2O = (2E)-4-hydroxy-3-methylbut-2-enyl diphosphate + 2 reduced [2Fe-2S]-[ferredoxin] + 2 H(+). The protein operates within isoprenoid biosynthesis; dimethylallyl diphosphate biosynthesis; dimethylallyl diphosphate from (2E)-4-hydroxy-3-methylbutenyl diphosphate: step 1/1. It functions in the pathway isoprenoid biosynthesis; isopentenyl diphosphate biosynthesis via DXP pathway; isopentenyl diphosphate from 1-deoxy-D-xylulose 5-phosphate: step 6/6. In terms of biological role, catalyzes the conversion of 1-hydroxy-2-methyl-2-(E)-butenyl 4-diphosphate (HMBPP) into a mixture of isopentenyl diphosphate (IPP) and dimethylallyl diphosphate (DMAPP). Acts in the terminal step of the DOXP/MEP pathway for isoprenoid precursor biosynthesis. This is 4-hydroxy-3-methylbut-2-enyl diphosphate reductase from Macrococcus caseolyticus (strain JCSC5402) (Macrococcoides caseolyticum).